A 445-amino-acid chain; its full sequence is Putative U-box domain-containing protein 47 (445 aa).

Positions 64-137 (EVPKEFICTL…KEWCLIHNFD (74 aa)) constitute a U-box domain.

The catalysed reaction is S-ubiquitinyl-[E2 ubiquitin-conjugating enzyme]-L-cysteine + [acceptor protein]-L-lysine = [E2 ubiquitin-conjugating enzyme]-L-cysteine + N(6)-ubiquitinyl-[acceptor protein]-L-lysine.. The protein operates within protein modification; protein ubiquitination. Functions as an E3 ubiquitin ligase. This is Putative U-box domain-containing protein 47 (PUB47) from Arabidopsis thaliana (Mouse-ear cress).